Here is a 239-residue protein sequence, read N- to C-terminus: uncharacterized protein (239 aa).

The protein localises to the endoplasmic reticulum. It is found in the golgi apparatus. This is an uncharacterized protein from Schizosaccharomyces pombe (strain 972 / ATCC 24843) (Fission yeast).